The primary structure comprises 113 residues: Hydrogenase maturation factor HypA (113 aa).

A Ni(2+)-binding site is contributed by histidine 2. Zn(2+) contacts are provided by cysteine 73, cysteine 76, cysteine 89, and cysteine 92.

Belongs to the HypA/HybF family.

Its function is as follows. Involved in the maturation of [NiFe] hydrogenases. Required for nickel insertion into the metal center of the hydrogenase. This chain is Hydrogenase maturation factor HypA, found in Prosthecochloris aestuarii (strain DSM 271 / SK 413).